The following is a 188-amino-acid chain: MRNLSRLSVLALAMLAANPAFAAGGGISLKNTDFVVLLGLLVFIGILVYFKVPGMIGKMLDSRAEGIEAELNEARALREEAQSLLASYERKQREVQEQADRIVEAAKEEATIAAEQARADLEVSLARRMAAAEDQIASAQAAAIKEVRDQSVSIAIAAAQDVIAKQLTAADANALIDGAITEVEAKLH.

A helical transmembrane segment spans residues Leu7–Ile27.

It belongs to the ATPase B chain family. F-type ATPases have 2 components, F(1) - the catalytic core - and F(0) - the membrane proton channel. F(1) has five subunits: alpha(3), beta(3), gamma(1), delta(1), epsilon(1). F(0) has three main subunits: a(1), b(2) and c(10-14). The alpha and beta chains form an alternating ring which encloses part of the gamma chain. F(1) is attached to F(0) by a central stalk formed by the gamma and epsilon chains, while a peripheral stalk is formed by the delta and b chains.

It localises to the cell inner membrane. F(1)F(0) ATP synthase produces ATP from ADP in the presence of a proton or sodium gradient. F-type ATPases consist of two structural domains, F(1) containing the extramembraneous catalytic core and F(0) containing the membrane proton channel, linked together by a central stalk and a peripheral stalk. During catalysis, ATP synthesis in the catalytic domain of F(1) is coupled via a rotary mechanism of the central stalk subunits to proton translocation. Functionally, component of the F(0) channel, it forms part of the peripheral stalk, linking F(1) to F(0). The sequence is that of ATP synthase subunit b 1 from Roseobacter denitrificans (strain ATCC 33942 / OCh 114) (Erythrobacter sp. (strain OCh 114)).